Here is a 273-residue protein sequence, read N- to C-terminus: Probable glycerophosphodiester phosphodiesterase GpdQ (273 aa).

Asp8, His10, Asp50, Asn80, His154, His194, and His196 together coordinate Fe cation.

It belongs to the cyclic nucleotide phosphodiesterase class-III family. Fe(2+) serves as cofactor.

The enzyme catalyses a sn-glycero-3-phosphodiester + H2O = an alcohol + sn-glycerol 3-phosphate + H(+). It catalyses the reaction sn-glycero-3-phosphoethanolamine + H2O = ethanolamine + sn-glycerol 3-phosphate + H(+). Functionally, catalyzes the hydrolysis of the 3'-5' phosphodiester bond of glycerophosphodiesters such as glycerophosphorylethanolamine (GPE), a typical phospholipid metabolite. This chain is Probable glycerophosphodiester phosphodiesterase GpdQ, found in Arcobacter nitrofigilis (strain ATCC 33309 / DSM 7299 / CCUG 15893 / LMG 7604 / NCTC 12251 / CI) (Campylobacter nitrofigilis).